Consider the following 74-residue polypeptide: Putative protein YozX (74 aa).

This chain is Putative protein YozX (yozX), found in Bacillus subtilis (strain 168).